The sequence spans 284 residues: Pseudouridine-5'-phosphate glycosidase (284 aa).

Glu8 acts as the Proton donor in catalysis. Residues Lys69 and Val89 each contribute to the substrate site. Asp119 is a Mn(2+) binding site. 121–123 is a binding site for substrate; that stretch reads SQD. The active-site Nucleophile is Lys140.

Belongs to the pseudouridine-5'-phosphate glycosidase family. In terms of assembly, homotrimer. Mn(2+) is required as a cofactor.

The enzyme catalyses D-ribose 5-phosphate + uracil = psi-UMP + H2O. In terms of biological role, catalyzes the reversible cleavage of pseudouridine 5'-phosphate (PsiMP) to ribose 5-phosphate and uracil. Functions biologically in the cleavage direction, as part of a pseudouridine degradation pathway. The chain is Pseudouridine-5'-phosphate glycosidase from Pseudothermotoga lettingae (strain ATCC BAA-301 / DSM 14385 / NBRC 107922 / TMO) (Thermotoga lettingae).